The following is a 491-amino-acid chain: N-succinylglutamate 5-semialdehyde dehydrogenase (491 aa).

223–228 (GSANTG) is a binding site for NAD(+). Residues E246 and C280 contribute to the active site.

It belongs to the aldehyde dehydrogenase family. AstD subfamily.

It carries out the reaction N-succinyl-L-glutamate 5-semialdehyde + NAD(+) + H2O = N-succinyl-L-glutamate + NADH + 2 H(+). It participates in amino-acid degradation; L-arginine degradation via AST pathway; L-glutamate and succinate from L-arginine: step 4/5. In terms of biological role, catalyzes the NAD-dependent reduction of succinylglutamate semialdehyde into succinylglutamate. This is N-succinylglutamate 5-semialdehyde dehydrogenase from Photorhabdus laumondii subsp. laumondii (strain DSM 15139 / CIP 105565 / TT01) (Photorhabdus luminescens subsp. laumondii).